Consider the following 2186-residue polypeptide: Non-reducing polyketide synthase men2 (2186 aa).

The 240-residue stretch at F16–H255 folds into the Starter acyltransferase (SAT) domain. In terms of domain architecture, Ketosynthase family 3 (KS3) spans S382 to E815. Catalysis depends on for beta-ketoacyl synthase activity residues C554, H690, and H729. The Malonyl-CoA:ACP transacylase (MAT) domain occupies V914–A1204. The tract at residues T1299–G1623 is product template (PT) domain. The interval Q1303–S1434 is N-terminal hotdog fold. Positions Q1303–A1619 constitute a PKS/mFAS DH domain. H1335 functions as the Proton acceptor; for dehydratase activity in the catalytic mechanism. The C-terminal hotdog fold stretch occupies residues T1463–A1619. The active-site Proton donor; for dehydratase activity is D1523. Residues V1666 to S1742 enclose the Carrier 1 domain. Position 1702 is an O-(pantetheine 4'-phosphoryl)serine (S1702). Residues G1747–G1785 are disordered. Residues A1749–P1783 are compositionally biased toward low complexity. A Carrier 2 domain is found at D1784 to S1861. The residue at position 1821 (S1821) is an O-(pantetheine 4'-phosphoryl)serine. Positions L1857–P1878 are disordered. Residues L1921–L2163 form a thioesterase (TE) domain region.

Pantetheine 4'-phosphate serves as cofactor.

The protein operates within secondary metabolite biosynthesis. Its function is as follows. Non-reducing polyketide synthase; part of the gene cluster that mediates the biosynthesis of menisporopsin A, a bioactive macrocyclic polylactone. The biosynthesis of menisporopsin A is performed by a reducing (man1) and a non-reducing (men2) polyketide synthase that catalyze the formation of each menisporopsin A subunits, while the esterification and cyclolactonization activities are probably peformed by the unusual thioesterase domain of men2. First, a reduced diketide intermediate, 3-hydroxybutyryl-S-ACP is produced by men1 and transferred to men2; this is followed by a second reduced diketide which is further elongated using 3 units of malonyl-coA to form a reduced pentaketide. The cyclization of this intermediate by the PT domain forms the second subunit, 2,4-dihydroxy-6-(2-hydroxy-n-propyl)benzoyl-S-ACP. The TE domain of men2 then esterifies the secondary hydroxyl group on the side chain of the second subunit with the acyl-TE of the first subunit to form the first ester intermediate. This process occurs iteratively to form a linear tetraester intermediate. The final subunit is formed by a similar process, except that an extra malonyl-CoA is required in an additional elongation step to form a reduced hexaketide intermediate, and the carbonyl group next to the secondary hydroxyl group is reduced by a trans-acting ketoreductase. Again, the PT domain catalyzes cyclization to form the largest subunit, 2,4-dihydroxy-6-(2,4-dihydroxy-n-pentyl) benzoyl-S-ACP. Then the linear pentaester intermediate is formed. In this step, if the intermediate transfer rate is slow, intra- molecular cyclization involving the secondary hydroxyl group of the pentaester intermediate may occur to form menisporopsin B. Alternatively, transfer of the pentaester intermediate to the TE domain would allow cyclolactonization to be catalyzed by the TE to form menisporopsin A. The protein is Non-reducing polyketide synthase men2 of Menisporopsis theobromae.